The chain runs to 441 residues: MISQSYRILSRISRNNELKKTFLTNLNCKSSSPSIIRSFCKKQNLDENFEYTNKLEVQELKHYIPCYTIMDQEGVVSKPDQDPNFSKEEVIKMYTTMLTLNVMDSILYDVQRQGRISFYMTSFGEEAIHIGSAAALEMSDTIFAQYRETGVFMWRGFTINDIINQCCTNEHDLGKGRQMPMHFGSRKINLQTISSPLTTQLPQAVGSSYAQKLAGEKNCTIVYFGEGAASEGDFHAAMNFAAALSTPTIFFCRNNKWAISTPSKEQYKGDGIAGRGPNGYGMKTIRVDGNDIWAVYNVTKLARKIAVEEQVPVLIEAMTYRVGHHSTSDDSSRYRTVEEINAWKEGKNPISRLRNYMNHKGWWSDAQEKETIANARTTVRESLVNAEKQYKPSINEIFTDVYDKPTPNLIEQQKELIEHLKLYPDEYPLNQFADSKLILKD.

Residues 1–17 (MISQSYRILSRISRNNE) constitute a mitochondrion transit peptide. 145–147 (QYR) contributes to the thiamine diphosphate binding site. The K(+) site is built by Ser194, Thr199, and Gln200.

This sequence belongs to the BCKDHA family. Heterotetramer of alpha and beta chains. The cofactor is thiamine diphosphate.

It localises to the mitochondrion matrix. It carries out the reaction N(6)-[(R)-lipoyl]-L-lysyl-[protein] + 3-methyl-2-oxobutanoate + H(+) = N(6)-[(R)-S(8)-2-methylpropanoyldihydrolipoyl]-L-lysyl-[protein] + CO2. The branched-chain alpha-keto dehydrogenase complex catalyzes the overall conversion of alpha-keto acids to acyl-CoA and CO(2). It contains multiple copies of three enzymatic components: branched-chain alpha-keto acid decarboxylase (E1), lipoamide acyltransferase (E2) and lipoamide dehydrogenase (E3). This is 2-oxoisovalerate dehydrogenase subunit alpha, mitochondrial (bkdA) from Dictyostelium discoideum (Social amoeba).